The sequence spans 301 residues: MENQINVGIIGAGAMGLLYAANFADKSKLTLFTHRKEQADLLNQKGISLIDNETTKNIHIHAAQITEEEQLTKQQLLIIAVKQYSLNEIIPILQKLPTKIPILFIQNGAGHLERLSELGTTRTILLGISEHGAGREDDTTVIWRGHGRTKYSIFQGELNDDLKELLTSSPAFPIEKHANYQAIIQEKLFINAVINPLTAVLGVQNGKLLENQEWHRLLIRVVNEVETVLPIENALEKVETICRTTALNFSSMALDCMNERMTEIDGIVLPILEKGDKTETSLPTLRTLYQIIKGLEGERHV.

NADP(+)-binding positions include 11-16, Asn-107, and Ala-133; that span reads GAGAMG. Asn-107 contributes to the substrate binding site. Lys-187 acts as the Proton donor in catalysis. 4 residues coordinate substrate: Asn-191, Asn-195, Asn-205, and Ser-251. Glu-263 lines the NADP(+) pocket.

It belongs to the ketopantoate reductase family.

The protein resides in the cytoplasm. The catalysed reaction is (R)-pantoate + NADP(+) = 2-dehydropantoate + NADPH + H(+). It participates in cofactor biosynthesis; (R)-pantothenate biosynthesis; (R)-pantoate from 3-methyl-2-oxobutanoate: step 2/2. In terms of biological role, catalyzes the NADPH-dependent reduction of ketopantoate into pantoic acid. This chain is 2-dehydropantoate 2-reductase, found in Listeria innocua serovar 6a (strain ATCC BAA-680 / CLIP 11262).